The chain runs to 386 residues: 1-deoxy-D-xylulose 5-phosphate reductoisomerase (386 aa).

Residues T13, G14, S15, I16, N40, and N122 each coordinate NADPH. K123 is a 1-deoxy-D-xylulose 5-phosphate binding site. Residue E124 participates in NADPH binding. A Mn(2+)-binding site is contributed by D148. 4 residues coordinate 1-deoxy-D-xylulose 5-phosphate: S149, E150, S177, and H201. E150 provides a ligand contact to Mn(2+). G207 lines the NADPH pocket. Residues S214, N219, K220, and E223 each coordinate 1-deoxy-D-xylulose 5-phosphate. E223 is a Mn(2+) binding site.

This sequence belongs to the DXR family. Requires Mg(2+) as cofactor. Mn(2+) is required as a cofactor.

It carries out the reaction 2-C-methyl-D-erythritol 4-phosphate + NADP(+) = 1-deoxy-D-xylulose 5-phosphate + NADPH + H(+). It functions in the pathway isoprenoid biosynthesis; isopentenyl diphosphate biosynthesis via DXP pathway; isopentenyl diphosphate from 1-deoxy-D-xylulose 5-phosphate: step 1/6. Catalyzes the NADPH-dependent rearrangement and reduction of 1-deoxy-D-xylulose-5-phosphate (DXP) to 2-C-methyl-D-erythritol 4-phosphate (MEP). The chain is 1-deoxy-D-xylulose 5-phosphate reductoisomerase from Francisella tularensis subsp. holarctica (strain OSU18).